We begin with the raw amino-acid sequence, 86 residues long: NAD(P)H-quinone oxidoreductase subunit O (86 aa).

This sequence belongs to the complex I NdhO subunit family. NDH-1 can be composed of about 15 different subunits; different subcomplexes with different compositions have been identified which probably have different functions.

The protein resides in the cellular thylakoid membrane. It carries out the reaction a plastoquinone + NADH + (n+1) H(+)(in) = a plastoquinol + NAD(+) + n H(+)(out). The enzyme catalyses a plastoquinone + NADPH + (n+1) H(+)(in) = a plastoquinol + NADP(+) + n H(+)(out). In terms of biological role, NDH-1 shuttles electrons from an unknown electron donor, via FMN and iron-sulfur (Fe-S) centers, to quinones in the respiratory and/or the photosynthetic chain. The immediate electron acceptor for the enzyme in this species is believed to be plastoquinone. Couples the redox reaction to proton translocation, and thus conserves the redox energy in a proton gradient. Cyanobacterial NDH-1 also plays a role in inorganic carbon-concentration. The polypeptide is NAD(P)H-quinone oxidoreductase subunit O (Prochlorococcus marinus (strain SARG / CCMP1375 / SS120)).